A 357-amino-acid chain; its full sequence is MKRILSFIFIILFFNSSYAVEKAAIITDYKPIFLPVITENKKIKIAIRSYLKNKKSYFVLVDPNSFKTEIVLQELVILPANKIEKENLLIKLNKTSYIKALNKYNFIDQSLQSFKQDEFSNKFTDNTIVYEHKLNSKSSHSSTFMNSTVQQNYGATSSMYKVKGQFLTIDMCPSSKNFEEVFFKKLVELSTKLKKAIPITICVSGLWINKHTEEFLWLLKQQENGYLQITWVNHSFSHPYFKDKPLEDNFLLSNKDDFENEVLEVGKILVSYNIAPSPFFRFPGLVSDQTLIAKLKNFGFIPLGSNAWLAKGEKIQDGSFILVHGNSNEKAGIDLIMPMLSELKLLPIEKAFLPTNL.

Residues 1–19 form the signal peptide; that stretch reads MKRILSFIFIILFFNSSYA.

This is an uncharacterized protein from Rickettsia prowazekii (strain Madrid E).